We begin with the raw amino-acid sequence, 679 residues long: Methionine--tRNA ligase (679 aa).

The 'HIGH' region signature appears at P15–H25. Residues C147, C150, C160, and C163 each contribute to the Zn(2+) site. The 'KMSKS' region signature appears at K332–S336. T335 contacts ATP. Residues D578 to K679 form the tRNA-binding domain.

It belongs to the class-I aminoacyl-tRNA synthetase family. MetG type 1 subfamily. As to quaternary structure, homodimer. Zn(2+) serves as cofactor.

It localises to the cytoplasm. The catalysed reaction is tRNA(Met) + L-methionine + ATP = L-methionyl-tRNA(Met) + AMP + diphosphate. Functionally, is required not only for elongation of protein synthesis but also for the initiation of all mRNA translation through initiator tRNA(fMet) aminoacylation. This is Methionine--tRNA ligase from Bacteroides fragilis (strain ATCC 25285 / DSM 2151 / CCUG 4856 / JCM 11019 / LMG 10263 / NCTC 9343 / Onslow / VPI 2553 / EN-2).